Consider the following 273-residue polypeptide: Large ribosomal subunit protein uL2 (273 aa).

The disordered stretch occupies residues 221 to 263 (RGTAMNPVDHPHGGGEGRNFGKHPVTPWGVQTKGKKTRHNKRT). Over residues 253 to 263 (KGKKTRHNKRT) the composition is skewed to basic residues.

This sequence belongs to the universal ribosomal protein uL2 family. In terms of assembly, part of the 50S ribosomal subunit. Forms a bridge to the 30S subunit in the 70S ribosome.

Functionally, one of the primary rRNA binding proteins. Required for association of the 30S and 50S subunits to form the 70S ribosome, for tRNA binding and peptide bond formation. It has been suggested to have peptidyltransferase activity; this is somewhat controversial. Makes several contacts with the 16S rRNA in the 70S ribosome. This is Large ribosomal subunit protein uL2 from Histophilus somni (strain 129Pt) (Haemophilus somnus).